Consider the following 209-residue polypeptide: Holliday junction branch migration complex subunit RuvA (209 aa).

The tract at residues 1–70 (MINYLRGQAI…EEQPLLYGFG (70 aa)) is domain I. The segment at 71 to 149 (TAPERELFRQ…AWRQLREATT (79 aa)) is domain II. The segment at 150-158 (TITAILPAA) is flexible linker. Residues 158 to 209 (AAILEDVQMTLLALGYSQEEIDRAMAVLSQDALFSKNTQPEDWIKGAINWLG) form a domain III region.

The protein belongs to the RuvA family. As to quaternary structure, homotetramer. Forms an RuvA(8)-RuvB(12)-Holliday junction (HJ) complex. HJ DNA is sandwiched between 2 RuvA tetramers; dsDNA enters through RuvA and exits via RuvB. An RuvB hexamer assembles on each DNA strand where it exits the tetramer. Each RuvB hexamer is contacted by two RuvA subunits (via domain III) on 2 adjacent RuvB subunits; this complex drives branch migration. In the full resolvosome a probable DNA-RuvA(4)-RuvB(12)-RuvC(2) complex forms which resolves the HJ.

It localises to the cytoplasm. Its function is as follows. The RuvA-RuvB-RuvC complex processes Holliday junction (HJ) DNA during genetic recombination and DNA repair, while the RuvA-RuvB complex plays an important role in the rescue of blocked DNA replication forks via replication fork reversal (RFR). RuvA specifically binds to HJ cruciform DNA, conferring on it an open structure. The RuvB hexamer acts as an ATP-dependent pump, pulling dsDNA into and through the RuvAB complex. HJ branch migration allows RuvC to scan DNA until it finds its consensus sequence, where it cleaves and resolves the cruciform DNA. This Microcystis aeruginosa (strain NIES-843 / IAM M-2473) protein is Holliday junction branch migration complex subunit RuvA.